We begin with the raw amino-acid sequence, 233 residues long: Lipoprotein-releasing system ATP-binding protein LolD (233 aa).

The 228-residue stretch at 6–233 (LQCDNLCKRY…TAELSLMGAE (228 aa)) folds into the ABC transporter domain. Position 42–49 (42–49 (GSSGSGKS)) interacts with ATP.

The protein belongs to the ABC transporter superfamily. Lipoprotein translocase (TC 3.A.1.125) family. The complex is composed of two ATP-binding proteins (LolD) and two transmembrane proteins (LolC and LolE).

The protein localises to the cell inner membrane. Functionally, part of the ABC transporter complex LolCDE involved in the translocation of mature outer membrane-directed lipoproteins, from the inner membrane to the periplasmic chaperone, LolA. Responsible for the formation of the LolA-lipoprotein complex in an ATP-dependent manner. The chain is Lipoprotein-releasing system ATP-binding protein LolD from Shigella boydii serotype 4 (strain Sb227).